The chain runs to 144 residues: Large ribosomal subunit protein uL16 (144 aa).

Residues 1 to 16 are compositionally biased toward basic residues; sequence MLIPKRVKYRKQHRGR. Residues 1-23 form a disordered region; the sequence is MLIPKRVKYRKQHRGRPGGGMAK.

The protein belongs to the universal ribosomal protein uL16 family. In terms of assembly, part of the 50S ribosomal subunit.

Functionally, binds 23S rRNA and is also seen to make contacts with the A and possibly P site tRNAs. This Pelotomaculum thermopropionicum (strain DSM 13744 / JCM 10971 / SI) protein is Large ribosomal subunit protein uL16.